Here is a 185-residue protein sequence, read N- to C-terminus: Photosystem I assembly protein Ycf4 (185 aa).

2 consecutive transmembrane segments (helical) span residues 20–40 (GNFF…AVGA) and 57–77 (ILFF…LFIS).

It belongs to the Ycf4 family.

Its subcellular location is the plastid. It localises to the chloroplast thylakoid membrane. Seems to be required for the assembly of the photosystem I complex. This chain is Photosystem I assembly protein Ycf4, found in Sorghum bicolor (Sorghum).